Here is a 1391-residue protein sequence, read N- to C-terminus: Leucine-rich PPR motif-containing protein, mitochondrial (1391 aa).

A mitochondrion-targeting transit peptide spans 1–42 (MSALLAGARFLLRPGLRALPAPCVRLSPGQGRYLNNTPGHFA). PPR repeat units follow at residues 110-144 (LLRSCGSLLPELQMSERTEMAHRIWEKLQELGAVF), 145-179 (DVSHYNALLKVYLQNEHKFSPTEYLAKMEAANVQP), 180-214 (NRVTYQRLIAAYCNEGDIEGASKILGFMKNKDLPI), 215-249 (TEAVFNTLVTGHARAGDMENAKNILSVMRSAGIEP), 250-284 (GPETYVALLTAYAEKGDINNIKQTLENVEKNEGSL), 389-425 (NLHSAPLQFALYCSLDAKKADLALELMKMMKQEGMPV), 704-738 (AIGTYAALIQLCCRHDNPDEALNLKQELNRKDSSA), 741-775 (DTSKYLALVKVFGKNGRIADAINVLKEMKEKDVPL), 779-813 (TTTSFFHILNAAALRGDAETVDKIHESIVTLGLAK), 815-850 (TSNLCSPLVSVHLEKGDLPAAMETLFTCSKKYNCMP), 948-982 (RDDMYYYLLKLCKENDDWKKADSAWTKIQEENVIP), 1028-1062 (PESSFQKRVQVLSKKNRAKDAYEAFMEGENNGTAM), 1063-1093 (SASAYSSLIRSMLSEGMLEEAKKVLNTAENH), 1100-1134 (NDAASSLLIITQVRRDYLKDALASLKAMLEGDKVP), and 1310-1344 (RETAYSYLMKCYATDKDATAATALYEKMKSESVSP). Residues 1118–1387 (KDALASLKAM…KLKKDKADSY (270 aa)) are RNA-binding.

It localises to the mitochondrion. Its subcellular location is the nucleus. In terms of biological role, may play a role in RNA metabolism in both nuclei and mitochondria. May bind mature mRNA in the nucleus outer membrane. In mitochondria binds to poly(A) mRNA. May be involved in transcription regulation. Binds single-stranded DNA. The protein is Leucine-rich PPR motif-containing protein, mitochondrial (lrpprc) of Xenopus tropicalis (Western clawed frog).